Reading from the N-terminus, the 145-residue chain is Large ribosomal subunit protein uL16 (145 aa).

This sequence belongs to the universal ribosomal protein uL16 family. Part of the 50S ribosomal subunit.

Its function is as follows. Binds 23S rRNA and is also seen to make contacts with the A and possibly P site tRNAs. This Desulfitobacterium hafniense (strain DSM 10664 / DCB-2) protein is Large ribosomal subunit protein uL16.